The chain runs to 276 residues: uncharacterized protein (276 aa).

Positions 20-137 (PVLIFIPGAN…PPINTFLPDS (118 aa)) constitute an AB hydrolase-1 domain. Residues 57-76 (GESELTEPLPDSASNPDSDY) form a disordered region.

This sequence belongs to the AB hydrolase superfamily.

This is an uncharacterized protein from Staphylococcus aureus (strain bovine RF122 / ET3-1).